A 181-amino-acid polypeptide reads, in one-letter code: Alkyl hydroperoxide reductase AhpD (181 aa).

Residue C131 is the Proton donor of the active site. C131 and C134 are joined by a disulfide. C134 (cysteine sulfenic acid (-SOH) intermediate) is an active-site residue.

The protein belongs to the AhpD family.

It carries out the reaction N(6)-[(R)-dihydrolipoyl]-L-lysyl-[lipoyl-carrier protein] + a hydroperoxide = N(6)-[(R)-lipoyl]-L-lysyl-[lipoyl-carrier protein] + an alcohol + H2O. In terms of biological role, antioxidant protein with alkyl hydroperoxidase activity. Required for the reduction of the AhpC active site cysteine residues and for the regeneration of the AhpC enzyme activity. This chain is Alkyl hydroperoxide reductase AhpD, found in Bradyrhizobium sp. (strain BTAi1 / ATCC BAA-1182).